The chain runs to 45 residues: Lysis protein for colicin E1* (45 aa).

The first 17 residues, M1–G17, serve as a signal peptide directing secretion. Residue C18 is the site of N-palmitoyl cysteine attachment. C18 is lipidated: S-diacylglycerol cysteine.

It localises to the cell outer membrane. Functionally, lysis proteins are required for both colicin release and partial cell lysis. The chain is Lysis protein for colicin E1* (kil) from Shigella sonnei.